The chain runs to 310 residues: uncharacterized protein (310 aa).

5 consecutive transmembrane segments (helical) span residues 10–30 (AVLS…AYAI), 44–64 (TVNL…ATPA), 78–98 (FSSG…GYSA), 113–133 (LGIA…WILW), and 161–181 (VVVA…PLIA). Residues 285 to 297 (PLEDPKSWQHPDE) show a composition bias toward basic and acidic residues. A disordered region spans residues 285 to 310 (PLEDPKSWQHPDEFPPSAPLNRDKPN).

Belongs to the cation diffusion facilitator (CDF) transporter (TC 2.A.4) family.

It is found in the cell membrane. This is an uncharacterized protein from Synechocystis sp. (strain ATCC 27184 / PCC 6803 / Kazusa).